The following is a 350-amino-acid chain: Anthranilate phosphoribosyltransferase (350 aa).

5-phospho-alpha-D-ribose 1-diphosphate-binding positions include glycine 94, 97 to 98, threonine 102, 104 to 107, 122 to 130, and serine 134; these read GD, NIST, and KHGNRAVSS. Position 94 (glycine 94) interacts with anthranilate. A Mg(2+)-binding site is contributed by serine 106. An anthranilate-binding site is contributed by asparagine 125. Arginine 180 serves as a coordination point for anthranilate. Mg(2+) contacts are provided by aspartate 239 and glutamate 240.

Belongs to the anthranilate phosphoribosyltransferase family. Homodimer. It depends on Mg(2+) as a cofactor.

It carries out the reaction N-(5-phospho-beta-D-ribosyl)anthranilate + diphosphate = 5-phospho-alpha-D-ribose 1-diphosphate + anthranilate. It participates in amino-acid biosynthesis; L-tryptophan biosynthesis; L-tryptophan from chorismate: step 2/5. Catalyzes the transfer of the phosphoribosyl group of 5-phosphorylribose-1-pyrophosphate (PRPP) to anthranilate to yield N-(5'-phosphoribosyl)-anthranilate (PRA). The protein is Anthranilate phosphoribosyltransferase of Geobacter sulfurreducens (strain ATCC 51573 / DSM 12127 / PCA).